A 189-amino-acid chain; its full sequence is Chitin synthase 1 (189 aa).

Belongs to the chitin synthase family. Class I subfamily.

It is found in the cell membrane. It carries out the reaction [(1-&gt;4)-N-acetyl-beta-D-glucosaminyl](n) + UDP-N-acetyl-alpha-D-glucosamine = [(1-&gt;4)-N-acetyl-beta-D-glucosaminyl](n+1) + UDP + H(+). Polymerizes chitin, a structural polymer of the cell wall and septum, by transferring the sugar moiety of UDP-GlcNAc to the non-reducing end of the growing chitin polymer. The chain is Chitin synthase 1 (CHS1) from Exophiala jeanselmei (Dematiaceous fungus).